The chain runs to 212 residues: MLPFLRDPAACLVPVILTALLLLAIGYLLGSTPSGYLAGRWLKGIDLRDCGSGSTGATNVLRNVGKGPALVVFLIDVGKGALAVLLAKTFGLSDWLQVLAGLAALAGHIWPVWLGWKGGKAVATGFGMFLGLAWPVGLACFGLFMAVISIFRIVSLSSVVAAIGLPLLMVVSGGSSAYVVVSLVASLMVLWRHRSNIERLIAGTEPKIGQKA.

The next 5 membrane-spanning stretches (helical) occupy residues 9–29, 67–87, 95–115, 128–148, and 168–190; these read AACL…GYLL, GPAL…VLLA, WLQV…VWLG, MFLG…MAVI, and LMVV…LMVL.

The protein belongs to the PlsY family. As to quaternary structure, probably interacts with PlsX.

Its subcellular location is the cell inner membrane. It carries out the reaction an acyl phosphate + sn-glycerol 3-phosphate = a 1-acyl-sn-glycero-3-phosphate + phosphate. It participates in lipid metabolism; phospholipid metabolism. Functionally, catalyzes the transfer of an acyl group from acyl-phosphate (acyl-PO(4)) to glycerol-3-phosphate (G3P) to form lysophosphatidic acid (LPA). This enzyme utilizes acyl-phosphate as fatty acyl donor, but not acyl-CoA or acyl-ACP. This is Glycerol-3-phosphate acyltransferase from Parasynechococcus marenigrum (strain WH8102).